Here is a 633-residue protein sequence, read N- to C-terminus: Alpha-amylase (633 aa).

Glu-123 acts as the Nucleophile in catalysis. Asp-214 functions as the Proton donor in the catalytic mechanism.

The protein belongs to the glycosyl hydrolase 57 family.

It catalyses the reaction Endohydrolysis of (1-&gt;4)-alpha-D-glucosidic linkages in polysaccharides containing three or more (1-&gt;4)-alpha-linked D-glucose units.. In Pyrococcus horikoshii (strain ATCC 700860 / DSM 12428 / JCM 9974 / NBRC 100139 / OT-3), this protein is Alpha-amylase (amyA).